The chain runs to 505 residues: MAVAELPNIVSTDSSPSPHPGSRLSSEPTDIESQKAPSNAEPKTDPNLVTWDGPDDPANPQNWSFAYRAFVTAIWVYGNLCTCIASSIFSSGSGQIAQRFHVGSTVVTLGISLFLLGYTVGPPVWGPLSERFGRKWPMVIGMALFTIFCIPVAVAKNLQTVLIGRFLTGVFGAAPLSLVGGSLVDMWNPAQRGVAMACCIGTIFGSPVLAPLMGNFIVESYLGWRFTQWLSCIMGGSCTVLVVFGLPETFAGSILRKKAAAIRKAGNPDVHTVYDGKQKGIKDIFVIFLLRPFALLVTEPILLLVTIYQAFIYGILYLVFVSYPIAFREVRGWSLGISALPYIGMMVGILIGCAIVVIQTRRNYDGNKAVVPEQRLPLMIAGGCLLPVGLFIFAWTSNPNIHWAGMVIGSAPVGTGMYMVFVQCLNYLVDVYPTIANSAIGANTFVRSFFGAGFPLFGPFMYHNLGVAWASSTLGFISIAMIPIPVLFYRYGARIRSWSKNSKHT.

The disordered stretch occupies residues 1–54 (MAVAELPNIVSTDSSPSPHPGSRLSSEPTDIESQKAPSNAEPKTDPNLVTWDGP). The next 13 helical transmembrane spans lie at 69 to 89 (AFVT…SSIF), 106 to 126 (VVTL…PVWG), 135 to 155 (KWPM…VAVA), 166 to 186 (FLTG…LVDM), 193 to 213 (GVAM…APLM), 226 to 246 (FTQW…VFGL), 280 to 300 (GIKD…VTEP), 301 to 321 (ILLL…LVFV), 337 to 357 (ISAL…AIVV), 376 to 396 (LPLM…FAWT), 401 to 421 (IHWA…YMVF), 440 to 460 (IGAN…FGPF), and 468 to 488 (AWAS…PVLF).

The protein belongs to the major facilitator superfamily. CAR1 family.

The protein resides in the membrane. Its function is as follows. MFS-type transporter; part of the gene cluster that mediates the biosynthesis of oryzines, natural products with an unusual maleidride backbone. The chain is MFS-type transporter oryN from Aspergillus oryzae (strain ATCC 42149 / RIB 40) (Yellow koji mold).